A 258-amino-acid polypeptide reads, in one-letter code: Pimeloyl-[acyl-carrier protein] methyl ester esterase (258 aa).

One can recognise an AB hydrolase-1 domain in the interval 16–242 (LVLLHGWGLN…AAHAPFISHP (227 aa)). Substrate is bound by residues Trp22, 82–83 (SM), and 143–147 (FLALQ). The active-site Nucleophile is the Ser82. Residues Asp207 and His235 contribute to the active site. Residue His235 participates in substrate binding.

The protein belongs to the AB hydrolase superfamily. Carboxylesterase BioH family. In terms of assembly, monomer.

Its subcellular location is the cytoplasm. It catalyses the reaction 6-carboxyhexanoyl-[ACP] methyl ester + H2O = 6-carboxyhexanoyl-[ACP] + methanol + H(+). Its pathway is cofactor biosynthesis; biotin biosynthesis. The physiological role of BioH is to remove the methyl group introduced by BioC when the pimeloyl moiety is complete. It allows to synthesize pimeloyl-ACP via the fatty acid synthetic pathway through the hydrolysis of the ester bonds of pimeloyl-ACP esters. This is Pimeloyl-[acyl-carrier protein] methyl ester esterase from Yersinia pseudotuberculosis serotype IB (strain PB1/+).